Reading from the N-terminus, the 188-residue chain is Large ribosomal subunit protein uL5 (188 aa).

This sequence belongs to the universal ribosomal protein uL5 family. As to quaternary structure, part of the 50S ribosomal subunit; part of the 5S rRNA/L5/L18/L25 subcomplex. Contacts the 5S rRNA and the P site tRNA. Forms a bridge to the 30S subunit in the 70S ribosome.

This is one of the proteins that bind and probably mediate the attachment of the 5S RNA into the large ribosomal subunit, where it forms part of the central protuberance. In the 70S ribosome it contacts protein S13 of the 30S subunit (bridge B1b), connecting the 2 subunits; this bridge is implicated in subunit movement. Contacts the P site tRNA; the 5S rRNA and some of its associated proteins might help stabilize positioning of ribosome-bound tRNAs. In Aquifex aeolicus (strain VF5), this protein is Large ribosomal subunit protein uL5.